The sequence spans 504 residues: Ribose import ATP-binding protein RbsA (504 aa).

2 consecutive ABC transporter domains span residues 6-242 (LELN…VGRR) and 250-495 (IDVQ…VGKT). Residue 38–45 (GENGAGKS) coordinates ATP.

The protein belongs to the ABC transporter superfamily. Ribose importer (TC 3.A.1.2.1) family. In terms of assembly, the complex is composed of an ATP-binding protein (RbsA), two transmembrane proteins (RbsC) and a solute-binding protein (RbsB).

The protein resides in the cell inner membrane. The catalysed reaction is D-ribose(out) + ATP + H2O = D-ribose(in) + ADP + phosphate + H(+). In terms of biological role, part of the ABC transporter complex RbsABC involved in ribose import. Responsible for energy coupling to the transport system. The chain is Ribose import ATP-binding protein RbsA from Aliivibrio fischeri (strain ATCC 700601 / ES114) (Vibrio fischeri).